The chain runs to 315 residues: Small ribosomal subunit protein uS2 (315 aa).

Residues 241-315 (AQHGEERRPG…QPAPGSDANR (75 aa)) form a disordered region. Basic and acidic residues predominate over residues 243–288 (HGEERRPGEEDRDAASERGQKDRRDRRDRRGGGRDRERREPREDRA).

It belongs to the universal ribosomal protein uS2 family.

The sequence is that of Small ribosomal subunit protein uS2 from Anaeromyxobacter sp. (strain Fw109-5).